A 388-amino-acid chain; its full sequence is MRYLTSGESHGPQLTVIIEGVPANLEIKAEDINKEMFKRQGGYGRGRRMKIEKDTIEIVSGVRNGFTLGSPITLVVTNDDFTHWRKIMGVAPISDEERENMKRTITKPRPGHADLIGGMKYNHRDLRNVLERSSARETAARVAVGAVSKILLEQLDIHLYSRVVEIGGIKDKGLYDVDMFKNNVDKNDVRVIDENIAQQMRDKIDEAKKDGDSIGGVVQVMAENMPIGVGSYVHYDRKLDGRIAQGVVSINAFKGVSFGEGFKAAEKPGSEIQDEIHYNQDSGYFRATNHLGGFEGGMSNGMPIIVNGVMKPIPTLYKPLNSVDINTKEDFKATIERSDSCAVPAASVVCEHVVAFELAKAVLEEFQSNHMDQLVAQIKERRQLNIEF.

Residues R39 and R45 each coordinate NADP(+). FMN contacts are provided by residues 132–134 (RSS), 251–252 (NA), G296, 311–315 (KPIPT), and R337.

This sequence belongs to the chorismate synthase family. As to quaternary structure, homotetramer. FMNH2 is required as a cofactor.

The catalysed reaction is 5-O-(1-carboxyvinyl)-3-phosphoshikimate = chorismate + phosphate. It functions in the pathway metabolic intermediate biosynthesis; chorismate biosynthesis; chorismate from D-erythrose 4-phosphate and phosphoenolpyruvate: step 7/7. Catalyzes the anti-1,4-elimination of the C-3 phosphate and the C-6 proR hydrogen from 5-enolpyruvylshikimate-3-phosphate (EPSP) to yield chorismate, which is the branch point compound that serves as the starting substrate for the three terminal pathways of aromatic amino acid biosynthesis. This reaction introduces a second double bond into the aromatic ring system. The polypeptide is Chorismate synthase (Staphylococcus epidermidis (strain ATCC 35984 / DSM 28319 / BCRC 17069 / CCUG 31568 / BM 3577 / RP62A)).